Consider the following 193-residue polypeptide: Peptidyl-tRNA hydrolase (193 aa).

Tyr-16 serves as a coordination point for tRNA. His-21 (proton acceptor) is an active-site residue. Positions 67, 69, and 115 each coordinate tRNA.

Belongs to the PTH family. As to quaternary structure, monomer.

It is found in the cytoplasm. It carries out the reaction an N-acyl-L-alpha-aminoacyl-tRNA + H2O = an N-acyl-L-amino acid + a tRNA + H(+). Functionally, hydrolyzes ribosome-free peptidyl-tRNAs (with 1 or more amino acids incorporated), which drop off the ribosome during protein synthesis, or as a result of ribosome stalling. Catalyzes the release of premature peptidyl moieties from peptidyl-tRNA molecules trapped in stalled 50S ribosomal subunits, and thus maintains levels of free tRNAs and 50S ribosomes. This chain is Peptidyl-tRNA hydrolase, found in Baumannia cicadellinicola subsp. Homalodisca coagulata.